A 629-amino-acid polypeptide reads, in one-letter code: Tudor and KH domain-containing protein homolog (629 aa).

A helical transmembrane segment spans residues 9-29; that stretch reads LPIALGLSLVTVTAFVAYYVL. KH domains lie at 46–109 and 119–185; these read INTI…ETLI and IMSE…KKLV. Positions 198–240 are disordered; that stretch reads IEQSKRPPRHSSSPPSPCPSPGDRDADADAQGDVDHTRVKYKR. Positions 219–240 are enriched in basic and acidic residues; that stretch reads GDRDADADAQGDVDHTRVKYKR. The 66-residue stretch at 297–362 folds into the Tudor domain; the sequence is HVSVGQVVAA…CELRADLLRL (66 aa). Positions 464–526 are disordered; the sequence is PAPSPRPSPP…GDDSKDKDGI (63 aa).

Belongs to the Tdrkh family. As to quaternary structure, interacts with (symmetrically methylated) Siwi. Interacts with (symmetrically methylated) Ago3. Interacts with PNLDC1/trimmer; interaction takes place on the mitochondrial surface and recruits PNLDC1/trimmer to Siwi-bound pre-piRNAs.

Its subcellular location is the mitochondrion outer membrane. Its function is as follows. Participates in the primary piRNA biogenesis pathway and is required during spermatogenesis to repress transposable elements and prevent their mobilization, which is essential for the germline integrity. The piRNA metabolic process mediates the repression of transposable elements during meiosis by forming complexes composed of piRNAs and Piwi proteins (Siwi or Ago3) and govern the methylation and subsequent repression of transposons. Required for the final steps of primary piRNA biogenesis by participating in the processing of 31-37 nt intermediates into mature piRNAs: acts by recruiting the exonuclease PNLDC1/trimmer to Siwi-bound pre-piRNAs. This chain is Tudor and KH domain-containing protein homolog, found in Bombyx mori (Silk moth).